Consider the following 445-residue polypeptide: Phosphoglucosamine mutase (445 aa).

S99 serves as the catalytic Phosphoserine intermediate. Positions 99, 242, 244, and 246 each coordinate Mg(2+). S99 carries the post-translational modification Phosphoserine.

Belongs to the phosphohexose mutase family. Mg(2+) is required as a cofactor. In terms of processing, activated by phosphorylation.

It carries out the reaction alpha-D-glucosamine 1-phosphate = D-glucosamine 6-phosphate. Its function is as follows. Catalyzes the conversion of glucosamine-6-phosphate to glucosamine-1-phosphate. This Campylobacter jejuni subsp. jejuni serotype O:6 (strain 81116 / NCTC 11828) protein is Phosphoglucosamine mutase.